Here is a 590-residue protein sequence, read N- to C-terminus: Bacillolysin (590 aa).

An N-terminal signal peptide occupies residues 1-24; it reads MKKVWFSLLGGAMLLGSVASGASA. A propeptide spans 25–286 (activation peptide); it reads ESSVSGPAQL…GSIVFQYDII (262 aa). Residues Asp-339, Asp-341, and Asp-419 each coordinate Ca(2+). His-423 is a Zn(2+) binding site. The active site involves Glu-424. Positions 427 and 447 each coordinate Zn(2+). Positions 466, 469, 470, 473, and 476 each coordinate Ca(2+). His-507 functions as the Proton donor in the catalytic mechanism.

Belongs to the peptidase M4 family. Requires Ca(2+) as cofactor. Zn(2+) is required as a cofactor.

It is found in the secreted. It carries out the reaction Similar, but not identical, to that of thermolysin.. Functionally, involved in the generation of beta- and alpha-amylases from the large amylase precursor. The sequence is that of Bacillolysin (npr) from Paenibacillus polymyxa (Bacillus polymyxa).